The primary structure comprises 460 residues: MALWGGRFESGASSMFKQVNDSLPFDQVMASQDIQGSISWSRALQKAGVLTADEQAQLEGALSELKAQADAGELDFNASSEEDIHSFVEAALIEKLGDIGRKLHTGRSRNDQVATDFRLWVREHIASLRADVLGVIKSLLNAASRHQEAIIPGYTHLQRAQPIHFAHWCLAYVEMLKRDLSRLDDLKVRMNQCPLGSGALAGTTFPVDRHAIAEELGFDSPCLNSLDAVSDRDFVLELLFVASTSMMHLSRLAEDMIFYNSGEAGFLQLGDSVTSGSSLMPQKKNPDALELMRGKCGRVFGALQALLVTMKGLPLAYNKDMQEDKEGAIDTVNQWHICLCIASEVLDSLQLNEERCRVAAAQGFSNATELADYLVGKGVPFRTGHDIAGRVVLQAIDKGCAIEDLPLSDLQAISDKIEDDVYPVLQLEYGVNQRNILGGTSKETVTKALYQELENLDKQG.

The protein belongs to the lyase 1 family. Argininosuccinate lyase subfamily.

It is found in the cytoplasm. The enzyme catalyses 2-(N(omega)-L-arginino)succinate = fumarate + L-arginine. Its pathway is amino-acid biosynthesis; L-arginine biosynthesis; L-arginine from L-ornithine and carbamoyl phosphate: step 3/3. This Alteromonas mediterranea (strain DSM 17117 / CIP 110805 / LMG 28347 / Deep ecotype) protein is Argininosuccinate lyase.